The chain runs to 212 residues: ATP-dependent Clp protease proteolytic subunit (212 aa).

S107 serves as the catalytic Nucleophile. H132 is a catalytic residue.

This sequence belongs to the peptidase S14 family. As to quaternary structure, fourteen ClpP subunits assemble into 2 heptameric rings which stack back to back to give a disk-like structure with a central cavity, resembling the structure of eukaryotic proteasomes.

Its subcellular location is the cytoplasm. The catalysed reaction is Hydrolysis of proteins to small peptides in the presence of ATP and magnesium. alpha-casein is the usual test substrate. In the absence of ATP, only oligopeptides shorter than five residues are hydrolyzed (such as succinyl-Leu-Tyr-|-NHMec, and Leu-Tyr-Leu-|-Tyr-Trp, in which cleavage of the -Tyr-|-Leu- and -Tyr-|-Trp bonds also occurs).. Cleaves peptides in various proteins in a process that requires ATP hydrolysis. Has a chymotrypsin-like activity. Plays a major role in the degradation of misfolded proteins. This Pseudoalteromonas atlantica (strain T6c / ATCC BAA-1087) protein is ATP-dependent Clp protease proteolytic subunit.